A 173-amino-acid chain; its full sequence is Transcription factor S-II-related protein (173 aa).

The region spanning 9–129 is the TFIIS central domain; the sequence is ISDKEREIVI…EETLNQMATV (121 aa). A TFIIS-type zinc finger spans residues 130–170; that stretch reads EWKPCYACKNTSYHFYQLQTRSADEPMTTFYICKNCMKTYK. Zn(2+) is bound by residues C134, C137, C162, and C165.

The protein belongs to the TFS-II family.

This is Transcription factor S-II-related protein from Acanthamoeba polyphaga mimivirus (APMV).